The chain runs to 797 residues: Protocadherin beta-9 (797 aa).

The first 26 residues, 1–26, serve as a signal peptide directing secretion; sequence MKTRGFSFPRQRQVLFLFLFWGVSLA. Over 27-690 the chain is Extracellular; it reads GSGFGRYSVT…AQADLLTVYL (664 aa). 5 Cadherin domains span residues 35 to 133, 138 to 242, 247 to 347, 352 to 451, and 456 to 561; these read VTEE…SPVF, MVLK…VPQF, YETQ…PPEL, LSNS…APAF, and YTLF…SPFV. A glycan (N-linked (GlcNAc...) asparagine) is linked at asparagine 169. The N-linked (GlcNAc...) asparagine glycan is linked to asparagine 418. N-linked (GlcNAc...) asparagine glycosylation occurs at asparagine 567. In terms of domain architecture, Cadherin 6 spans 568 to 671; sequence GSAPCTELVP…LVDGFSQPYL (104 aa). A helical membrane pass occupies residues 691-711; it reads VVALASVSSLFLLSVLLFVAV. Residues 712 to 797 are Cytoplasmic-facing; the sequence is RLCRRSRAAS…TLPNSFGFNY (86 aa). Positions 777 to 797 are disordered; sequence HRGGKEIEENSTLPNSFGFNY. Residues 786–797 are compositionally biased toward polar residues; it reads NSTLPNSFGFNY.

The protein localises to the cell membrane. Potential calcium-dependent cell-adhesion protein. May be involved in the establishment and maintenance of specific neuronal connections in the brain. The polypeptide is Protocadherin beta-9 (PCDHB9) (Homo sapiens (Human)).